Reading from the N-terminus, the 174-residue chain is Male-enhanced antigen 1 (174 aa).

Disordered stretches follow at residues 1 to 77 (MAAV…PVGD) and 94 to 123 (LHLP…IPMD). Acidic residues-rich tracts occupy residues 38–48 (SSEEPEEEQEE), 65–77 (PEQE…PVGD), and 101–110 (LESEDEDEEG). Ser103 carries the post-translational modification Phosphoserine.

In terms of biological role, may play an important role in spermatogenesis and/or testis development. The polypeptide is Male-enhanced antigen 1 (MEA1) (Sus scrofa (Pig)).